Consider the following 660-residue polypeptide: Protein FAM161A (660 aa).

Coiled coils occupy residues 93-120 (EEYFKKVEELKAAHIETMAKLEKMYQDK) and 296-320 (YHDLVKQKEERRRSLKEKSKEALLA). Residues 341–525 (QLRDFLKYKK…PTVSSRGREQ (185 aa)) form a required for interaction with CFAP418 region. Residues lysine 468 and lysine 484 each participate in a glycyl lysine isopeptide (Lys-Gly) (interchain with G-Cter in SUMO2) cross-link. Residues 522 to 552 (GREQAVRKSEKERMREYQRELEEREEKLKKR) adopt a coiled-coil conformation. Residues 605–660 (KSVTEDKESFNEEEKIEERENGEENYFIDTNSQDSYKEKDEANEESEEEKSVEESH) form a disordered region. Basic and acidic residues predominate over residues 606–623 (SVTEDKESFNEEEKIEER). Over residues 645–660 (EANEESEEEKSVEESH) the composition is skewed to acidic residues.

Belongs to the FAM161 family. In terms of assembly, interacts (via central region) with CFAP418 (via N-terminus); the interaction is direct. Interacts (via C-terminus) with microtubules. Interacts with LCA5. Interacts with CEP290. Interacts with SDCCAG8. Interacts with FAM161B. Interacts with POC1B. Interacts with CEP78. Forms a microtubule-associated complex with POC5, CETN2 and POC1B. Interacts with CCDC15. In terms of tissue distribution, isoform 1 and isoform 3 are widely expressed with highest levels in retina and testis, with isoform 1 being the most abundant in all tissues tested.

It is found in the cytoplasm. The protein localises to the cytoskeleton. Its subcellular location is the cilium basal body. It localises to the cell projection. The protein resides in the cilium. It is found in the microtubule organizing center. The protein localises to the centrosome. Its subcellular location is the centriole. Involved in ciliogenesis. This is Protein FAM161A (FAM161A) from Homo sapiens (Human).